The sequence spans 184 residues: Probable sensory rhodopsin transducer (184 aa).

Helical transmembrane passes span Thr-14–Tyr-34 and Gly-52–Gly-72. Positions Arg-73–Gln-125 constitute an HAMP domain.

The protein belongs to the methyl-accepting chemotaxis (MCP) protein family. Interacts with Xop2/SRM.

Its subcellular location is the membrane. The HtrM-Xop2/SRM complex may interact with CheB or CheR and modulate their availability to Sop1 or Sop2. In Haloarcula marismortui (strain ATCC 43049 / DSM 3752 / JCM 8966 / VKM B-1809) (Halobacterium marismortui), this protein is Probable sensory rhodopsin transducer (htrM).